Reading from the N-terminus, the 404-residue chain is Inner membrane transport protein YdiM (404 aa).

The Periplasmic segment spans residues 1–5; it reads MKNPY. A helical membrane pass occupies residues 6-26; that stretch reads FPTALGLYFNYLVHGMGVLLM. Topologically, residues 27 to 43 are cytoplasmic; sequence SLNMASLETLWQTNAAG. The helical transmembrane segment at 44–64 threads the bilayer; that stretch reads VSIVISSLGIGRLSVLLFAGL. The Periplasmic portion of the chain corresponds to 65–84; the sequence is LSDRFGRRPFIMLGMCCYMA. Residues 85–105 form a helical membrane-spanning segment; the sequence is FFFGILQTNNIIIAYVFGFLA. At 106–132 the chain is on the cytoplasmic side; the sequence is GMANSFLDAGTYPSLMEAFPRSPGTAN. A helical membrane pass occupies residues 133-153; the sequence is ILIKAFVSSGQFLLPLIISLL. The Periplasmic segment spans residues 154-157; sequence VWAE. The helical transmembrane segment at 158–178 threads the bilayer; the sequence is LWFGWSFMIAAGIMFINALFL. Topologically, residues 179–206 are cytoplasmic; it reads YRCTFPPHPGRRLPVIKKTTSSTEHRCS. Residues 207–227 traverse the membrane as a helical segment; that stretch reads IIDLASYTLYGYISMATFYLV. Over 228–246 the chain is Periplasmic; sequence SQWLAQYGQFVAGMSYTMS. A helical transmembrane segment spans residues 247–267; it reads IKLLSIYTVGSLLCVFITAPL. The Cytoplasmic segment spans residues 268 to 273; the sequence is IRNTVR. The helical transmembrane segment at 274–294 threads the bilayer; that stretch reads PTTLLMLYTFISFIALFTVCL. Residues 295 to 296 are Periplasmic-facing; that stretch reads HP. The chain crosses the membrane as a helical span at residues 297–317; it reads TFYVVIIFAFVIGFTSAGGVV. Residues 318–336 are Cytoplasmic-facing; the sequence is QIGLTLMAERFPYAKGKAT. The chain crosses the membrane as a helical span at residues 337-357; that stretch reads GIYYSAGSIATFTIPLITAHL. Topologically, residues 358–364 are periplasmic; it reads SQRSIAD. The chain crosses the membrane as a helical span at residues 365–385; it reads IMWFDTAIAAIGFLLALFIGL. Topologically, residues 386–404 are cytoplasmic; that stretch reads RSRKKTRHHSLKENVAPGG.

The protein belongs to the major facilitator superfamily.

The protein resides in the cell inner membrane. The sequence is that of Inner membrane transport protein YdiM (ydiM) from Escherichia coli (strain K12).